The sequence spans 211 residues: Thymidylate kinase (211 aa).

7 to 14 (GIDASGKS) contributes to the ATP binding site.

Belongs to the thymidylate kinase family.

The catalysed reaction is dTMP + ATP = dTDP + ADP. Functionally, phosphorylation of dTMP to form dTDP in both de novo and salvage pathways of dTTP synthesis. The protein is Thymidylate kinase of Mesomycoplasma hyopneumoniae (strain 232) (Mycoplasma hyopneumoniae).